The sequence spans 61 residues: MDPNCSCASDGSCSCAGACKCKQCKCTSCKKSCCSCCPVGCAKCSQGCICKEASDKCSCCA.

N-acetylmethionine is present on Met1. The segment at 1 to 29 is beta; sequence MDPNCSCASDGSCSCAGACKCKQCKCTSC. A divalent metal cation-binding residues include Cys5, Cys7, Cys13, Cys15, Cys19, Cys21, Cys24, Cys26, Cys29, Cys33, Cys34, Cys36, Cys37, Cys41, Cys44, Cys48, Cys50, and Cys57. Residues 30 to 61 form an alpha region; the sequence is KKSCCSCCPVGCAKCSQGCICKEASDKCSCCA. Ser58 is modified (phosphoserine). A divalent metal cation contacts are provided by Cys59 and Cys60.

It belongs to the metallothionein superfamily. Type 1 family.

Metallothioneins have a high content of cysteine residues that bind various heavy metals; these proteins are transcriptionally regulated by both heavy metals and glucocorticoids. The polypeptide is Metallothionein-2 (Mt2) (Mus musculus (Mouse)).